The chain runs to 448 residues: Probable glycine dehydrogenase (decarboxylating) subunit 1 (448 aa).

This sequence belongs to the GcvP family. N-terminal subunit subfamily. In terms of assembly, the glycine cleavage system is composed of four proteins: P, T, L and H. In this organism, the P 'protein' is a heterodimer of two subunits.

It catalyses the reaction N(6)-[(R)-lipoyl]-L-lysyl-[glycine-cleavage complex H protein] + glycine + H(+) = N(6)-[(R)-S(8)-aminomethyldihydrolipoyl]-L-lysyl-[glycine-cleavage complex H protein] + CO2. The glycine cleavage system catalyzes the degradation of glycine. The P protein binds the alpha-amino group of glycine through its pyridoxal phosphate cofactor; CO(2) is released and the remaining methylamine moiety is then transferred to the lipoamide cofactor of the H protein. The chain is Probable glycine dehydrogenase (decarboxylating) subunit 1 from Anoxybacillus flavithermus (strain DSM 21510 / WK1).